The following is a 352-amino-acid chain: Uroporphyrinogen decarboxylase (352 aa).

Substrate-binding positions include 26-30 (RQAGR), Phe45, Asp76, Tyr153, Ser208, and His323.

This sequence belongs to the uroporphyrinogen decarboxylase family. In terms of assembly, homodimer.

It is found in the cytoplasm. It carries out the reaction uroporphyrinogen III + 4 H(+) = coproporphyrinogen III + 4 CO2. It participates in porphyrin-containing compound metabolism; protoporphyrin-IX biosynthesis; coproporphyrinogen-III from 5-aminolevulinate: step 4/4. Its function is as follows. Catalyzes the decarboxylation of four acetate groups of uroporphyrinogen-III to yield coproporphyrinogen-III. In Parasynechococcus marenigrum (strain WH8102), this protein is Uroporphyrinogen decarboxylase.